The chain runs to 369 residues: Phospho-N-acetylmuramoyl-pentapeptide-transferase (369 aa).

A run of 10 helical transmembrane segments spans residues 13–33 (ISGI…ALTL), 49–69 (LPLL…VPLL), 95–115 (MGGI…SNFA), 119–139 (LAVS…DWQI), 154–174 (LALQ…NQPA), 183–203 (WVSF…FVLV), 215–235 (IDGL…AIVA), 237–257 (TSPA…GFLA), 281–301 (AVAL…IFFV), and 346–366 (VVSS…AIAS).

This sequence belongs to the glycosyltransferase 4 family. MraY subfamily. Mg(2+) is required as a cofactor.

It localises to the cell inner membrane. It catalyses the reaction UDP-N-acetyl-alpha-D-muramoyl-L-alanyl-gamma-D-glutamyl-meso-2,6-diaminopimeloyl-D-alanyl-D-alanine + di-trans,octa-cis-undecaprenyl phosphate = di-trans,octa-cis-undecaprenyl diphospho-N-acetyl-alpha-D-muramoyl-L-alanyl-D-glutamyl-meso-2,6-diaminopimeloyl-D-alanyl-D-alanine + UMP. It participates in cell wall biogenesis; peptidoglycan biosynthesis. Functionally, catalyzes the initial step of the lipid cycle reactions in the biosynthesis of the cell wall peptidoglycan: transfers peptidoglycan precursor phospho-MurNAc-pentapeptide from UDP-MurNAc-pentapeptide onto the lipid carrier undecaprenyl phosphate, yielding undecaprenyl-pyrophosphoryl-MurNAc-pentapeptide, known as lipid I. The polypeptide is Phospho-N-acetylmuramoyl-pentapeptide-transferase (Nostoc sp. (strain PCC 7120 / SAG 25.82 / UTEX 2576)).